A 171-amino-acid chain; its full sequence is Mitochondrial import inner membrane translocase subunit Tim17-A (171 aa).

Cys9 and Cys78 are disulfide-bonded. Transmembrane regions (helical) follow at residues 17 to 37, 63 to 77, and 113 to 133; these read CGGA…FKGF, GGSF…STID, and VGSA…GILL. Positions 147-171 are disordered; the sequence is FAEDHSQLPSSQLPSSPFGDYRQYQ. A compositionally biased stretch (low complexity) spans 153 to 163; that stretch reads QLPSSQLPSSP.

Belongs to the Tim17/Tim22/Tim23 family. In terms of assembly, component of the TIM23 complex at least composed of TIMM23, TIMM17 (TIMM17A or TIMM17B) and TIMM50. The complex interacts with the TIMM44 component of the PAM complex and with DNAJC15. Post-translationally, degraded by YMEL1 downstream of the integrated stress response (ISR).

Its subcellular location is the mitochondrion inner membrane. Functionally, essential component of the TIM23 complex, a complex that mediates the translocation of transit peptide-containing proteins across the mitochondrial inner membrane. This chain is Mitochondrial import inner membrane translocase subunit Tim17-A (Timm17a), found in Rattus norvegicus (Rat).